The chain runs to 286 residues: Translocon-associated protein subunit alpha (286 aa).

A signal peptide spans 1–21; sequence MRLLPRLLLLLLLVFPATVLL. The Lumenal portion of the chain corresponds to 22 to 207; it reads RGGPGGSLAE…EREDGLDGQT (186 aa). The interval 28–83 is disordered; the sequence is SLAEAQDLSEDEETVEDSVIEDEDDEAEVEEDEPTDLAEDREEEDVSGEPEASPSA. Over residues 34-75 the composition is skewed to acidic residues; it reads DLSEDEETVEDSVIEDEDDEAEVEEDEPTDLAEDREEEDVSG. Residues asparagine 136 and asparagine 191 are each glycosylated (N-linked (GlcNAc...) asparagine). Residues 208–228 traverse the membrane as a helical segment; it reads IFMYMSLAGLGLLVVVGLHQL. Residues 229-286 are Cytoplasmic-facing; that stretch reads LESRNRKRPIQKVEMGTSSQNDVDMSWIPQETLNQINKASPRRLPRKRPQKRSVGSDE. Serine 247 carries the phosphoserine modification. Phosphothreonine is present on threonine 260. The disordered stretch occupies residues 264–286; sequence INKASPRRLPRKRPQKRSVGSDE. Serine 268 is modified (phosphoserine). The segment covering 268–279 has biased composition (basic residues); it reads SPRRLPRKRPQK.

The protein belongs to the TRAP-alpha family. Heterotetramer of TRAP-alpha, TRAP-beta, TRAP-delta and TRAP-gamma. Interacts with palmitoylated calnexin (CALX), the interaction is required for efficient folding of glycosylated proteins. Post-translationally, phosphorylated in its cytoplasmic tail.

It localises to the endoplasmic reticulum membrane. TRAP proteins are part of a complex whose function is to bind calcium to the ER membrane and thereby regulate the retention of ER resident proteins. May be involved in the recycling of the translocation apparatus after completion of the translocation process or may function as a membrane-bound chaperone facilitating folding of translocated proteins. The protein is Translocon-associated protein subunit alpha (SSR1) of Oryctolagus cuniculus (Rabbit).